The sequence spans 363 residues: 3-isopropylmalate dehydrogenase (363 aa).

An NAD(+)-binding site is contributed by 78–91 (GKKWDDLPINQRPE). Substrate is bound by residues R99, R109, R138, and D227. Positions 227, 251, and 255 each coordinate Mg(2+). 285–297 (GSAPDIEGKNIAN) lines the NAD(+) pocket.

Belongs to the isocitrate and isopropylmalate dehydrogenases family. LeuB type 1 subfamily. As to quaternary structure, homodimer. It depends on Mg(2+) as a cofactor. The cofactor is Mn(2+).

It is found in the cytoplasm. The catalysed reaction is (2R,3S)-3-isopropylmalate + NAD(+) = 4-methyl-2-oxopentanoate + CO2 + NADH. It participates in amino-acid biosynthesis; L-leucine biosynthesis; L-leucine from 3-methyl-2-oxobutanoate: step 3/4. Functionally, catalyzes the oxidation of 3-carboxy-2-hydroxy-4-methylpentanoate (3-isopropylmalate) to 3-carboxy-4-methyl-2-oxopentanoate. The product decarboxylates to 4-methyl-2 oxopentanoate. The sequence is that of 3-isopropylmalate dehydrogenase from Buchnera aphidicola subsp. Uroleucon rudbeckiae.